Consider the following 629-residue polypeptide: tRNA uridine 5-carboxymethylaminomethyl modification enzyme MnmG (629 aa).

FAD contacts are provided by residues 13-18, V125, and S180; that span reads GGGHAG. An NAD(+)-binding site is contributed by 273-287; it reads GPRYCPSIEDKVMRF. An FAD-binding site is contributed by Q370.

It belongs to the MnmG family. Homodimer. Heterotetramer of two MnmE and two MnmG subunits. FAD serves as cofactor.

The protein localises to the cytoplasm. NAD-binding protein involved in the addition of a carboxymethylaminomethyl (cmnm) group at the wobble position (U34) of certain tRNAs, forming tRNA-cmnm(5)s(2)U34. This is tRNA uridine 5-carboxymethylaminomethyl modification enzyme MnmG from Escherichia coli O139:H28 (strain E24377A / ETEC).